The sequence spans 207 residues: Guanylate kinase (207 aa).

The region spanning 6-185 (GLLIVLSGPS…AKNRIQCIVE (180 aa)) is the Guanylate kinase-like domain. 13 to 20 (GPSGVGKG) is an ATP binding site.

This sequence belongs to the guanylate kinase family.

Its subcellular location is the cytoplasm. The enzyme catalyses GMP + ATP = GDP + ADP. In terms of biological role, essential for recycling GMP and indirectly, cGMP. The sequence is that of Guanylate kinase from Staphylococcus aureus (strain bovine RF122 / ET3-1).